A 211-amino-acid polypeptide reads, in one-letter code: ATP phosphoribosyltransferase (211 aa).

The protein belongs to the ATP phosphoribosyltransferase family. Short subfamily. As to quaternary structure, heteromultimer composed of HisG and HisZ subunits.

It is found in the cytoplasm. The enzyme catalyses 1-(5-phospho-beta-D-ribosyl)-ATP + diphosphate = 5-phospho-alpha-D-ribose 1-diphosphate + ATP. The protein operates within amino-acid biosynthesis; L-histidine biosynthesis; L-histidine from 5-phospho-alpha-D-ribose 1-diphosphate: step 1/9. Catalyzes the condensation of ATP and 5-phosphoribose 1-diphosphate to form N'-(5'-phosphoribosyl)-ATP (PR-ATP). Has a crucial role in the pathway because the rate of histidine biosynthesis seems to be controlled primarily by regulation of HisG enzymatic activity. This chain is ATP phosphoribosyltransferase, found in Bacillus thuringiensis subsp. konkukian (strain 97-27).